The sequence spans 1379 residues: DNA-directed RNA polymerase subunit beta (1379 aa).

This sequence belongs to the RNA polymerase beta chain family. As to quaternary structure, the RNAP catalytic core consists of 2 alpha, 1 beta, 1 beta' and 1 omega subunit. When a sigma factor is associated with the core the holoenzyme is formed, which can initiate transcription.

It catalyses the reaction RNA(n) + a ribonucleoside 5'-triphosphate = RNA(n+1) + diphosphate. In terms of biological role, DNA-dependent RNA polymerase catalyzes the transcription of DNA into RNA using the four ribonucleoside triphosphates as substrates. This is DNA-directed RNA polymerase subunit beta from Rhizobium johnstonii (strain DSM 114642 / LMG 32736 / 3841) (Rhizobium leguminosarum bv. viciae).